A 799-amino-acid polypeptide reads, in one-letter code: ATP-dependent DNA helicase Hel308 (799 aa).

Residues Gln29 and 47–54 contribute to the ATP site; that span reads IPTASGKT. In terms of domain architecture, Helicase ATP-binding spans 34–200; the sequence is EAGVTEGENL…WLDAGLVDSD (167 aa). Residues 145-148 carry the DEAH box motif; it reads DEVH. The 202-residue stretch at 234–435 folds into the Helicase C-terminal domain; sequence QTAAIVRDTL…EPALRTHILA (202 aa). Disordered regions lie at residues 522-566 and 750-799; these read RGAS…DRDP and NVLE…LGDF. A compositionally biased stretch (acidic residues) spans 553–566; sequence LAEDADESDADRDP.

Belongs to the helicase family. Hel308 subfamily. Monomer.

The enzyme catalyses Couples ATP hydrolysis with the unwinding of duplex DNA by translocating in the 3'-5' direction.. The catalysed reaction is ATP + H2O = ADP + phosphate + H(+). Its function is as follows. DNA-dependent ATPase and 3'-5' DNA helicase that may be involved in repair of stalled replication forks. The polypeptide is ATP-dependent DNA helicase Hel308 (Haloarcula marismortui (strain ATCC 43049 / DSM 3752 / JCM 8966 / VKM B-1809) (Halobacterium marismortui)).